We begin with the raw amino-acid sequence, 433 residues long: Poly(A) ribonuclease POP2 (433 aa).

The residue at position 1 (M1) is an N-acetylmethionine. A disordered region spans residues 78–98; the sequence is LLTQQQQQQQQQQQPFNIGTP. Low complexity predominate over residues 81-91; it reads QQQQQQQQQQQ. Phosphothreonine; by YAK1 is present on T97. A divalent metal cation-binding residues include S188, E190, D310, and Q394.

This sequence belongs to the CAF1 family. In terms of assembly, subunit of the 1.0 MDa CCR4-NOT core complex that contains CCR4, CAF1, NOT1, NOT2, NOT3, NOT4, NOT5, CAF40 and CAF130. In the complex interacts with NOT1. The core complex probably is part of a less characterized 1.9 MDa CCR4-NOT complex. Mg(2+) serves as cofactor.

The protein resides in the cytoplasm. The protein localises to the nucleus. It carries out the reaction Exonucleolytic cleavage of poly(A) to 5'-AMP.. Its function is as follows. Acts as a probably catalytic component of the CCR4-NOT core complex, which in the nucleus seems to be a general transcription factor, and in the cytoplasm the major mRNA deadenylase involved in mRNA turnover. In vitro, POP2 has 3'-exoribonuclease activity with a preference for poly(A) RNAs, but also degrades poly(U) and poly(C) RNAs. Is part of a glucose-sensing system involved in growth control in response to glucose availability. The protein is Poly(A) ribonuclease POP2 (POP2) of Saccharomyces cerevisiae (strain ATCC 204508 / S288c) (Baker's yeast).